A 126-amino-acid chain; its full sequence is Probable 4-amino-4-deoxy-L-arabinose-phosphoundecaprenol flippase subunit ArnF (126 aa).

The Cytoplasmic segment spans residues 1 to 4 (MKGY). The helical transmembrane segment at 5-25 (IWGLISVLLVTIAQLLLKWGV) threads the bilayer. Residues 26–49 (VNLPALNLGLHWFDIEWLWSHRHS) are Periplasmic-facing. A helical transmembrane segment spans residues 50-70 (LVAVMAGLAGYLLSMLCWLFT). At 71–79 (LKYLPLNKA) the chain is on the cytoplasmic side. The helical transmembrane segment at 80 to 100 (YPLISLSYVFVYLMVALLPWF) threads the bilayer. At 101–102 (NE) the chain is on the periplasmic side. Residues 103 to 123 (TITLLKTAGVIFILYGVWLIS) form a helical membrane-spanning segment. Over 124 to 126 (RPE) the chain is Cytoplasmic.

This sequence belongs to the ArnF family. Heterodimer of ArnE and ArnF.

The protein localises to the cell inner membrane. It participates in bacterial outer membrane biogenesis; lipopolysaccharide biosynthesis. Its function is as follows. Translocates 4-amino-4-deoxy-L-arabinose-phosphoundecaprenol (alpha-L-Ara4N-phosphoundecaprenol) from the cytoplasmic to the periplasmic side of the inner membrane. The sequence is that of Probable 4-amino-4-deoxy-L-arabinose-phosphoundecaprenol flippase subunit ArnF from Photorhabdus laumondii subsp. laumondii (strain DSM 15139 / CIP 105565 / TT01) (Photorhabdus luminescens subsp. laumondii).